The following is a 473-amino-acid chain: Kremen protein 1 (473 aa).

Positions 1–19 are cleaved as a signal peptide; the sequence is MAPPAARLALLSAAALTLA. At 21–392 the chain is on the extracellular side; it reads RPAPGPRSGP…ANSHRVEGWT (372 aa). The Kringle domain occupies 31–114; it reads ECFTANGADY…YWKYCEIPAC (84 aa). Cystine bridges form between Cys-32–Cys-114, Cys-55–Cys-95, Cys-84–Cys-109, Cys-122–Cys-186, Cys-147–Cys-167, Cys-151–Cys-169, Cys-190–Cys-198, and Cys-214–Cys-240. Asn-59 carries an N-linked (GlcNAc...) asparagine glycan. Residues 116-210 enclose the WSC domain; it reads MPGNLGCYKD…DGRIILFDTL (95 aa). In terms of domain architecture, CUB spans 214 to 321; that stretch reads CGGNYSAMAA…QGFAVLYQAT (108 aa). N-linked (GlcNAc...) asparagine glycosylation is found at Asn-217, Asn-255, Asn-293, Asn-333, and Asn-345. A helical transmembrane segment spans residues 393–413; sequence VYGLATLLILTVTAVVAKILL. Residues 414–473 are Cytoplasmic-facing; the sequence is HVTFKSHRVPASGDLRDCRQPGASGDIWTIFYEPSTTISIFKKKLKGQSQQDDRNPLVSD. Positions 414 to 473 are essential for apoptotic activity; it reads HVTFKSHRVPASGDLRDCRQPGASGDIWTIFYEPSTTISIFKKKLKGQSQQDDRNPLVSD.

In terms of assembly, forms a ternary complex with DKK1 and LRP6. Interacts with LRP6 in a DKK1-dependent manner. Interacts with DKK1 and RSPO1 (via FU repeats). In the adult, widely expressed with high levels in heart, lung, kidney, skeletal muscle and testis.

Its subcellular location is the cell membrane. Functionally, receptor for Dickkopf proteins. Cooperates with DKK1/2 to inhibit Wnt/beta-catenin signaling by promoting the endocytosis of Wnt receptors LRP5 and LRP6. In the absence of DKK1, potentiates Wnt-beta-catenin signaling by maintaining LRP5 or LRP6 at the cell membrane. Can trigger apoptosis in a Wnt-independent manner and this apoptotic activity is inhibited upon binding of the ligand DKK1. Plays a role in limb development; attenuates Wnt signaling in the developing limb to allow normal limb patterning and can also negatively regulate bone formation. Modulates cell fate decisions in the developing cochlea with an inhibitory role in hair cell fate specification. The protein is Kremen protein 1 (Kremen1) of Mus musculus (Mouse).